The sequence spans 420 residues: Glucose-1-phosphate adenylyltransferase (420 aa).

Residues tyrosine 107, glycine 172, 187–188 (EK), and serine 205 each bind alpha-D-glucose 1-phosphate.

This sequence belongs to the bacterial/plant glucose-1-phosphate adenylyltransferase family. In terms of assembly, homotetramer.

It catalyses the reaction alpha-D-glucose 1-phosphate + ATP + H(+) = ADP-alpha-D-glucose + diphosphate. Its pathway is glycan biosynthesis; glycogen biosynthesis. In terms of biological role, involved in the biosynthesis of ADP-glucose, a building block required for the elongation reactions to produce glycogen. Catalyzes the reaction between ATP and alpha-D-glucose 1-phosphate (G1P) to produce pyrophosphate and ADP-Glc. This Agrobacterium fabrum (strain C58 / ATCC 33970) (Agrobacterium tumefaciens (strain C58)) protein is Glucose-1-phosphate adenylyltransferase.